The sequence spans 291 residues: ATP synthase gamma chain (291 aa).

The protein belongs to the ATPase gamma chain family. As to quaternary structure, F-type ATPases have 2 components, CF(1) - the catalytic core - and CF(0) - the membrane proton channel. CF(1) has five subunits: alpha(3), beta(3), gamma(1), delta(1), epsilon(1). CF(0) has three main subunits: a, b and c.

The protein localises to the cell inner membrane. Its function is as follows. Produces ATP from ADP in the presence of a proton gradient across the membrane. The gamma chain is believed to be important in regulating ATPase activity and the flow of protons through the CF(0) complex. This is ATP synthase gamma chain from Rhodopseudomonas palustris (strain ATCC BAA-98 / CGA009).